The following is a 353-amino-acid chain: Peroxidase 34 (353 aa).

The signal sequence occupies residues 1 to 30; that stretch reads MHFSSSSTSSTWTILITLGCLMLHASLSAA. Position 31 is a pyrrolidone carboxylic acid (Gln-31). 4 cysteine pairs are disulfide-bonded: Cys-41/Cys-121, Cys-74/Cys-79, Cys-127/Cys-331, and Cys-207/Cys-239. A glycan (N-linked (GlcNAc...) asparagine) is linked at Asn-43. His-72 serves as the catalytic Proton acceptor. Ca(2+)-binding residues include Asp-73, Val-76, Gly-78, Asp-80, and Ser-82. Asn-87 is a glycosylation site (N-linked (GlcNAc...) asparagine). Pro-169 is a binding site for substrate. Position 200 (His-200) interacts with heme b. Thr-201 contributes to the Ca(2+) binding site. N-linked (GlcNAc...) asparagine glycans are attached at residues Asn-216, Asn-228, and Asn-244. Residues Asp-252, Thr-255, and Asp-260 each contribute to the Ca(2+) site. N-linked (GlcNAc...) asparagine glycosylation is present at Asn-285.

The protein belongs to the peroxidase family. Classical plant (class III) peroxidase subfamily. Heme b is required as a cofactor. It depends on Ca(2+) as a cofactor. Preferentially expressed in roots, but also detected in flowers, leaves and stems.

The protein localises to the secreted. The protein resides in the vacuole. The catalysed reaction is 2 a phenolic donor + H2O2 = 2 a phenolic radical donor + 2 H2O. Functionally, removal of H(2)O(2), oxidation of toxic reductants, biosynthesis and degradation of lignin, suberization, auxin catabolism, response to environmental stresses such as wounding, pathogen attack and oxidative stress. These functions might be dependent on each isozyme/isoform in each plant tissue. May be implicated in the systemic acquired resistance response via the salicylic acid signal transduction pathway. Exhibits a Ca(2+)-pectate binding affinity which could be interpreted in vivo as a specificity to interact with the pectic structure of the cell wall. In Arabidopsis thaliana (Mouse-ear cress), this protein is Peroxidase 34 (PER34).